We begin with the raw amino-acid sequence, 367 residues long: MSSTLAKIAEIEAEMARTQKNKATAHHLGLLKARLAKLRRELITPKGGGGGGPGEGFDVAKTGDARIGFVGFPSVGKSTLLSNLAGVYSEVAAYEFTTLTTVPGVIRYKGAKIQLLDLPGIIEGAKDGKGRGRQVIAVARTCNLILIVLDVLKPLGHKKIIENELEGFGIRLNSKPPNIGFKKKDKGGINLTATCPQSELDAETVKSILAEYKIHNADVTLRSDATADDLIDVVEGNRVYIPCIYVLNKIDQISIEELDIIYKVPHCVPISAHHRWNFDDLLEKIWDYLKLVRIYTKPKGQLPDYTSPVVLPYSRTTVEDFCMKIHKNLIKEFKYALVWGLSVKHNPQKVGKDHTLEDEDVIQIVKK.

At S2 the chain carries N-acetylserine. The tract at residues 2-16 is required for interaction with STK16; that stretch reads SSTLAKIAEIEAEMA. (3S)-3-hydroxylysine is present on K22. The region spanning 65 to 290 is the OBG-type G domain; sequence ARIGFVGFPS…LLEKIWDYLK (226 aa). GTP is bound by residues 71–78, 96–100, 117–120, 248–251, and 271–273; these read GFPSVGKS, FTTLT, DLPG, NKID, and SAH. Mg(2+) is bound by residues S78 and T98. T100 is subject to Phosphothreonine; by STK16. Residues 290–366 enclose the TGS domain; sequence KLVRIYTKPK…EDEDVIQIVK (77 aa).

The protein belongs to the TRAFAC class OBG-HflX-like GTPase superfamily. OBG GTPase family. As to quaternary structure, interacts (via its C-terminal) with TAL1. Interacts with DFRP1/ZC3H15; this interaction prevents DRG1 poly-ubiquitination and degradation by proteasome. DRG1-ZC3H15/DFRP1 complex co-sediments with polysomes. Interacts with STK16. Interacts with JMJD7. Sumoylated by UBE2I in response to MEKK1-mediated stimuli. Post-translationally, hydroxylated (with S stereochemistry) at C-3 of Lys-22 by JMJD7. In terms of processing, phosphorylated at Thr-100 by STK16. Polyubiquitinated; this modification induces proteolytic degradation and is impaired by interaction with ZC3H15.

Its subcellular location is the nucleus. It localises to the cytoplasm. The enzyme catalyses GTP + H2O = GDP + phosphate + H(+). Its activity is regulated as follows. The GTPase activity is enhanced by potassium ions as well as by DFRP1 binding. Catalyzes the conversion of GTP to GDP through hydrolysis of the gamma-phosphate bond in GTP. Appears to have an intrinsic GTPase activity that is stimulated by ZC3H15/DFRP1 binding likely by increasing the affinity for the potassium ions. When hydroxylated at C-3 of 'Lys-22' by JMJD7, may bind to RNA and play a role in translation. Binds to microtubules and promotes microtubule polymerization and bundling that are required for mitotic spindle assembly during prophase to anaphase transition. GTPase activity is not necessary for these microtubule-related functions. This Bos taurus (Bovine) protein is Developmentally-regulated GTP-binding protein 1 (DRG1).